Here is a 610-residue protein sequence, read N- to C-terminus: Elongation factor 4 (610 aa).

The region spanning 11–193 (EKIRNFSIIA…QIVEKVPAPT (183 aa)) is the tr-type G domain. Residues 23-28 (DHGKST) and 140-143 (NKID) contribute to the GTP site.

The protein belongs to the TRAFAC class translation factor GTPase superfamily. Classic translation factor GTPase family. LepA subfamily.

The protein localises to the cell membrane. It carries out the reaction GTP + H2O = GDP + phosphate + H(+). Required for accurate and efficient protein synthesis under certain stress conditions. May act as a fidelity factor of the translation reaction, by catalyzing a one-codon backward translocation of tRNAs on improperly translocated ribosomes. Back-translocation proceeds from a post-translocation (POST) complex to a pre-translocation (PRE) complex, thus giving elongation factor G a second chance to translocate the tRNAs correctly. Binds to ribosomes in a GTP-dependent manner. This Streptococcus pyogenes serotype M49 (strain NZ131) protein is Elongation factor 4.